Reading from the N-terminus, the 136-residue chain is UPF0299 membrane protein PM0880 (136 aa).

Helical transmembrane passes span 5-25 (IVDL…GEWI), 29-49 (LNIG…GLTF), 67-87 (YMAL…DVLF), and 92-112 (VLLL…GLLS).

It belongs to the UPF0299 family.

It is found in the cell inner membrane. The sequence is that of UPF0299 membrane protein PM0880 from Pasteurella multocida (strain Pm70).